Here is a 178-residue protein sequence, read N- to C-terminus: Arginine repressor (178 aa).

The interval 1–21 is disordered; the sequence is MSQAQENEHAGPAVPQTRTAR.

This sequence belongs to the ArgR family.

It is found in the cytoplasm. Its pathway is amino-acid biosynthesis; L-arginine biosynthesis [regulation]. In terms of biological role, regulates arginine biosynthesis genes. The sequence is that of Arginine repressor from Streptomyces avermitilis (strain ATCC 31267 / DSM 46492 / JCM 5070 / NBRC 14893 / NCIMB 12804 / NRRL 8165 / MA-4680).